Consider the following 253-residue polypeptide: Hydroxyacylglutathione hydrolase (253 aa).

Positions 54, 56, 58, 59, 110, 127, and 165 each coordinate Zn(2+).

The protein belongs to the metallo-beta-lactamase superfamily. Glyoxalase II family. As to quaternary structure, monomer. The cofactor is Zn(2+).

It carries out the reaction an S-(2-hydroxyacyl)glutathione + H2O = a 2-hydroxy carboxylate + glutathione + H(+). Its pathway is secondary metabolite metabolism; methylglyoxal degradation; (R)-lactate from methylglyoxal: step 2/2. Functionally, thiolesterase that catalyzes the hydrolysis of S-D-lactoyl-glutathione to form glutathione and D-lactic acid. In Idiomarina loihiensis (strain ATCC BAA-735 / DSM 15497 / L2-TR), this protein is Hydroxyacylglutathione hydrolase.